Here is a 180-residue protein sequence, read N- to C-terminus: NTLLVCAAVIRFRHLRSKVTNFFVISLAVSDLLVAVLVMPWKAVAEIAGFWPFGSFCNIWVAFDIMCSTASILNLCVISVDRYWAISSPFRYERKMTPKAAFILIGVAWTLSVLISFIPVQLSWHKAKPTSPPDGNATSLDETVDNCDSSLSRTYSISSSLVNFYNPVAIMXVTYTRIHR.

The helical transmembrane segment at 1–10 threads the bilayer; the sequence is NTLLVCAAVI. At 11-21 the chain is on the cytoplasmic side; that stretch reads RFRHLRSKVTN. The helical transmembrane segment at 22 to 48 threads the bilayer; that stretch reads FFVISLAVSDLLVAVLVMPWKAVAEIA. The Extracellular segment spans residues 49–57; sequence GFWPFGSFC. A disulfide bridge connects residues Cys-57 and Cys-147. A helical membrane pass occupies residues 58 to 80; sequence NIWVAFDIMCSTASILNLCVISV. Residues 81–99 lie on the Cytoplasmic side of the membrane; sequence DRYWAISSPFRYERKMTPK. A helical transmembrane segment spans residues 100-124; sequence AAFILIGVAWTLSVLISFIPVQLSW. The Extracellular portion of the chain corresponds to 125-153; the sequence is HKAKPTSPPDGNATSLDETVDNCDSSLSR. Asn-136 is a glycosylation site (N-linked (GlcNAc...) asparagine). A helical transmembrane segment spans residues 154 to 179; the sequence is TYSISSSLVNFYNPVAIMXVTYTRIH. Position 180 (Arg-180) is a topological domain, cytoplasmic.

Belongs to the G-protein coupled receptor 1 family. As to quaternary structure, interacts with DNAJC14 via its C-terminus. Interacts with DRD2. Interacts with DORIP1.

It is found in the cell membrane. Its subcellular location is the endoplasmic reticulum membrane. It localises to the cell projection. The protein localises to the cilium membrane. In terms of biological role, dopamine receptor whose activity is mediated by G proteins which activate adenylyl cyclase. This is D(1A) dopamine receptor (DRD1) from Oryctolagus cuniculus (Rabbit).